Here is a 404-residue protein sequence, read N- to C-terminus: uncharacterized protein (404 aa).

It belongs to the lymphocryptovirus BTRF1 family.

This is an uncharacterized protein from Epstein-Barr virus (strain GD1) (HHV-4).